A 280-amino-acid polypeptide reads, in one-letter code: Phosphatidylinositol N-acetylglucosaminyltransferase GPI2 subunit (280 aa).

Over 1–53 the chain is Cytoplasmic; it reads MTRSPWKRLLWLKQEYPDNYTDPSFIELRARQKAESNQKSDRKLSEAARAQIR. The chain crosses the membrane as a helical span at residues 54-74; sequence LDFISFYQTILNTSFIYITFT. Position 75 (Tyr-75) is a topological domain, extracellular. A helical transmembrane segment spans residues 76-96; that stretch reads IYYYGFDPIPPTIFLSFITLI. Over 97-108 the chain is Cytoplasmic; the sequence is ISRTKVDPLLSS. The helical transmembrane segment at 109 to 129 threads the bilayer; it reads FMDVKSSLIITFAMLTLSPVL. Over 130 to 135 the chain is Extracellular; sequence KSLSKT. Residues 136–156 form a helical membrane-spanning segment; that stretch reads TASDSIWTLSFWLTLWYIFVI. Topologically, residues 157 to 189 are cytoplasmic; the sequence is SSTKSKDKPSNLSTNILVALVAVLSSRLSTTID. Residues 190-210 traverse the membrane as a helical segment; the sequence is VFCFLLICIQLNIILPTYLSV. The Extracellular portion of the chain corresponds to 211 to 220; it reads TNKVVPIISN. The chain crosses the membrane as a helical span at residues 221 to 241; that stretch reads IIVYSFLNVALGWIYMLLIFF. Topologically, residues 242–280 are cytoplasmic; that stretch reads ASVFYITVLPKWFIYWKINYHKRDNDLLSTWDARTPILD.

This sequence belongs to the PIGC family. As to quaternary structure, component of the phosphatidylinositol N-acetylglucosaminyltransferase (GPI-GlcNAc transferase) complex composed of at least GPI1, GPI2, GPI3, GPI15, GPI19 and ERI1. Interacts with ERI1.

It localises to the membrane. The enzyme catalyses a 1,2-diacyl-sn-glycero-3-phospho-(1D-myo-inositol) + UDP-N-acetyl-alpha-D-glucosamine = a 6-(N-acetyl-alpha-D-glucosaminyl)-1-(1,2-diacyl-sn-glycero-3-phospho)-1D-myo-inositol + UDP + H(+). Its pathway is glycolipid biosynthesis; glycosylphosphatidylinositol-anchor biosynthesis. Its function is as follows. Part of the complex catalyzing the transfer of N-acetylglucosamine from UDP-N-acetylglucosamine to phosphatidylinositol, the first step of GPI biosynthesis. In Saccharomyces cerevisiae (strain ATCC 204508 / S288c) (Baker's yeast), this protein is Phosphatidylinositol N-acetylglucosaminyltransferase GPI2 subunit (GPI2).